A 31-amino-acid polypeptide reads, in one-letter code: Photosystem II reaction center protein T (31 aa).

A helical membrane pass occupies residues 3–23 (SVAYILILTMALAVLFFAIAF).

Belongs to the PsbT family. As to quaternary structure, PSII is composed of 1 copy each of membrane proteins PsbA, PsbB, PsbC, PsbD, PsbE, PsbF, PsbH, PsbI, PsbJ, PsbK, PsbL, PsbM, PsbT, PsbX, PsbY, PsbZ, Psb30/Ycf12, peripheral proteins PsbO, CyanoQ (PsbQ), PsbU, PsbV and a large number of cofactors. It forms dimeric complexes.

The protein localises to the cellular thylakoid membrane. Its function is as follows. Found at the monomer-monomer interface of the photosystem II (PS II) dimer, plays a role in assembly and dimerization of PSII. PSII is a light-driven water plastoquinone oxidoreductase, using light energy to abstract electrons from H(2)O, generating a proton gradient subsequently used for ATP formation. This chain is Photosystem II reaction center protein T, found in Gloeothece citriformis (strain PCC 7424) (Cyanothece sp. (strain PCC 7424)).